A 1109-amino-acid polypeptide reads, in one-letter code: Protein phosphatase 1 regulatory subunit 3A (1109 aa).

A phosphoserine; by GSK3 mark is found at Ser40 and Ser44. Residue Ser48 is modified to Phosphoserine; by PKA and ISPK. Ser51 bears the Phosphoserine mark. Position 58 is a phosphothreonine (Thr58). The PP1-binding motif signature appears at 64-67 (RRVS). Residue Ser67 is modified to Phosphoserine; by PKA. One can recognise a CBM21 domain in the interval 124 to 232 (QLQVQKAMLE…NNNGTNYTLV (109 aa)). The span at 236–251 (KEPEPEPGKPLEEAPS) shows a compositional bias: basic and acidic residues. 4 disordered regions span residues 236–278 (KEPE…NFEN), 340–424 (GKNT…SDGS), 436–455 (DDNA…CSFP), and 493–517 (YFKK…KEKR). Polar residues-rich tracts occupy residues 340–352 (GKNT…SNIP), 360–384 (KNQS…SAES), and 396–406 (YSSGNESSHQP). Ser843 carries the post-translational modification Phosphoserine. Disordered regions lie at residues 945 to 985 (SATE…RKEK) and 1011 to 1048 (SREN…ETQD). The segment covering 951–963 (YNCSPTRETQGQP) has biased composition (polar residues). Composition is skewed to basic and acidic residues over residues 966-985 (KPEE…RKEK) and 1011-1034 (SREN…KEFE). The segment covering 1035–1048 (SSASSSLPVQETQD) has biased composition (polar residues). The chain crosses the membrane as a helical span at residues 1066–1086 (FLLFLMFLVTVYHYDLMIGLA).

Interacts with PPP1CC catalytic subunit of PP1, and associates with glycogen. Post-translationally, phosphorylation at Ser-48 by ISPK stimulates the dephosphorylation of glycogen synthase and phosphorylase kinase. Skeletal muscle, diaphragm and cardiac muscle.

Its subcellular location is the membrane. Seems to act as a glycogen-targeting subunit for PP1. PP1 is essential for cell division, and participates in the regulation of glycogen metabolism, muscle contractility and protein synthesis. Plays an important role in glycogen synthesis but is not essential for insulin activation of glycogen synthase. This chain is Protein phosphatase 1 regulatory subunit 3A (PPP1R3A), found in Oryctolagus cuniculus (Rabbit).